The following is a 352-amino-acid chain: Lipase chaperone (352 aa).

The chain crosses the membrane as a helical span at residues 7–28 (LSLVAVVVAGGLTLYWRWPAAV).

Belongs to the lipase chaperone family.

The protein localises to the cell inner membrane. Its function is as follows. May be involved in the folding of the extracellular lipase during its passage through the periplasm. The polypeptide is Lipase chaperone (lifO) (Pseudomonas wisconsinensis).